We begin with the raw amino-acid sequence, 118 residues long: Large ribosomal subunit protein bL19 (118 aa).

This sequence belongs to the bacterial ribosomal protein bL19 family.

Functionally, this protein is located at the 30S-50S ribosomal subunit interface and may play a role in the structure and function of the aminoacyl-tRNA binding site. This is Large ribosomal subunit protein bL19 from Onion yellows phytoplasma (strain OY-M).